Reading from the N-terminus, the 250-residue chain is MLAKRIIPCLDVKDGKTVKGVNFINFRDAGDPVALAAEYSRKGADEIVFLDITASHEKRKTLTDLARRVAAEVNIPFTIGGGVRELEDVSALLAAGADKVSLNSSALKNPNFITEIAKNFGSQVCVCAIDAKENNGKWTCYLNGGRIDTGKDLFVWAKEAENLGAGEILFTSMNHDGVKTGFANEALAKLGQIVNIPVIASGGAGSKEHFKDVFLLGHADAALAASVFHFGEIDISELKTYLRGNRIVVR.

Catalysis depends on residues Asp11 and Asp130.

It belongs to the HisA/HisF family. In terms of assembly, heterodimer of HisH and HisF.

It is found in the cytoplasm. The enzyme catalyses 5-[(5-phospho-1-deoxy-D-ribulos-1-ylimino)methylamino]-1-(5-phospho-beta-D-ribosyl)imidazole-4-carboxamide + L-glutamine = D-erythro-1-(imidazol-4-yl)glycerol 3-phosphate + 5-amino-1-(5-phospho-beta-D-ribosyl)imidazole-4-carboxamide + L-glutamate + H(+). Its pathway is amino-acid biosynthesis; L-histidine biosynthesis; L-histidine from 5-phospho-alpha-D-ribose 1-diphosphate: step 5/9. IGPS catalyzes the conversion of PRFAR and glutamine to IGP, AICAR and glutamate. The HisF subunit catalyzes the cyclization activity that produces IGP and AICAR from PRFAR using the ammonia provided by the HisH subunit. The protein is Imidazole glycerol phosphate synthase subunit HisF of Elusimicrobium minutum (strain Pei191).